The following is a 1070-amino-acid chain: Regulator of Ty1 transposition protein 107 (1070 aa).

BRCT domains are found at residues 2 to 103, 117 to 213, 260 to 352, and 369 to 453; these read STSL…QDSV, NPFH…LYHF, HPNK…FYMF, and PFHA…EQCY. Serine 304 carries the post-translational modification Phosphoserine. Threonine 532 is modified (phosphothreonine). The tract at residues 572 to 659 is disordered; the sequence is SRASFPVVDS…LQVQLGQRTK (88 aa). A compositionally biased stretch (basic and acidic residues) spans 580–592; that stretch reads DSKKSNLQKKDSN. Phosphoserine occurs at positions 591 and 593. Basic and acidic residues-rich tracts occupy residues 603 to 615 and 622 to 645; these read CEGH…KEFT and DAPK…KKEE. The residue at position 720 (serine 720) is a Phosphoserine. Residues 722-731 are compositionally biased toward basic and acidic residues; it reads NDDHINDEKP. A disordered region spans residues 722-753; sequence NDDHINDEKPAVNSKYTTPKTSQNITSGVDTP. The span at 735-753 shows a compositional bias: polar residues; sequence SKYTTPKTSQNITSGVDTP. Phosphoserine is present on residues serine 800 and serine 806. BRCT domains lie at 829 to 910 and 934 to 1049; these read FNEL…IDLL and GINE…CVES.

As to quaternary structure, forms a complex with the cullin-RING ligase (CRL) RTT101(MMS1-MMS22). Interacts with MMS22 and RTT101. Interacts with histone H2A; requires H2A to be phosphorylated (gamma-H2A). Interacts with RAD55. In terms of processing, phosphorylated by MEC1.

It localises to the nucleus. Functionally, required for resumption of chromosome replication after DNA damage, specifically in S phase. Is recruited to chromatin in the presence of RTT109 and RTT101 in response to stalled replication forks and acts as a scaffold during DNA repair. The protein is Regulator of Ty1 transposition protein 107 (RTT107) of Saccharomyces cerevisiae (strain ATCC 204508 / S288c) (Baker's yeast).